The sequence spans 169 residues: Peptide deformylase (169 aa).

Fe cation contacts are provided by C91 and H133. E134 is a catalytic residue. Residue H137 participates in Fe cation binding.

This sequence belongs to the polypeptide deformylase family. It depends on Fe(2+) as a cofactor.

The enzyme catalyses N-terminal N-formyl-L-methionyl-[peptide] + H2O = N-terminal L-methionyl-[peptide] + formate. Removes the formyl group from the N-terminal Met of newly synthesized proteins. Requires at least a dipeptide for an efficient rate of reaction. N-terminal L-methionine is a prerequisite for activity but the enzyme has broad specificity at other positions. The chain is Peptide deformylase from Escherichia coli (strain SMS-3-5 / SECEC).